The sequence spans 320 residues: Cytochrome f (320 aa).

The first 35 residues, 1 to 35 (MENRNTFSWVKEQITRSISVSIMIYVITRTSISNA), serve as a signal peptide directing secretion. Heme is bound by residues Y36, C56, C59, and H60. Residues 286 to 306 (VQGLLFFFASVILAQVFLVLK) traverse the membrane as a helical segment.

The protein belongs to the cytochrome f family. In terms of assembly, the 4 large subunits of the cytochrome b6-f complex are cytochrome b6, subunit IV (17 kDa polypeptide, petD), cytochrome f and the Rieske protein, while the 4 small subunits are PetG, PetL, PetM and PetN. The complex functions as a dimer. The cofactor is heme.

It localises to the plastid. The protein resides in the chloroplast thylakoid membrane. In terms of biological role, component of the cytochrome b6-f complex, which mediates electron transfer between photosystem II (PSII) and photosystem I (PSI), cyclic electron flow around PSI, and state transitions. The sequence is that of Cytochrome f from Hordeum vulgare (Barley).